A 497-amino-acid polypeptide reads, in one-letter code: Cobyric acid synthase (497 aa).

Positions tryptophan 257–phenylalanine 431 constitute a GATase cobBQ-type domain. The active-site Nucleophile is the cysteine 338. The active site involves histidine 423.

This sequence belongs to the CobB/CobQ family. CobQ subfamily.

It participates in cofactor biosynthesis; adenosylcobalamin biosynthesis. Its function is as follows. Catalyzes amidations at positions B, D, E, and G on adenosylcobyrinic A,C-diamide. NH(2) groups are provided by glutamine, and one molecule of ATP is hydrogenolyzed for each amidation. In Mycolicibacterium paratuberculosis (strain ATCC BAA-968 / K-10) (Mycobacterium paratuberculosis), this protein is Cobyric acid synthase.